The sequence spans 108 residues: Glutaredoxin-1 (108 aa).

One can recognise a Glutaredoxin domain in the interval 3-106 (EEFVQQRLAN…DILSSIGVLR (104 aa)). C23 and C26 form a disulfide bridge.

Belongs to the glutaredoxin family.

It localises to the virion. Its function is as follows. Has thioltransferase and dehydroascorbate reductase activities. The chain is Glutaredoxin-1 (OPG075) from Ectromelia virus (strain Moscow) (ECTV).